We begin with the raw amino-acid sequence, 290 residues long: Short chain dehydrogenase andI (290 aa).

Positions 35, 120, 154, 186, 190, 219, and 221 each coordinate NADP(+). Y186 serves as the catalytic Proton acceptor. Catalysis depends on K190, which acts as the Lowers pKa of active site Tyr.

It belongs to the short-chain dehydrogenases/reductases (SDR) family.

It participates in secondary metabolite biosynthesis; terpenoid biosynthesis. Short chain dehydrogenase; part of the gene cluster that mediates the biosynthesis of anditomin, a fungal meroterpenoid. The first step of the pathway is the synthesis of 3,5-dimethylorsellinic acid (DMOA) by the polyketide synthase andM. DMOA is then converted to the phthalide compound 5,7-dihydroxy-4,6-dimethylphthalide (DHDMP) by the cytochrome P450 monooxygenase andK, which is further prenylated by the prenyltransferase andD to yield farnesyl-DHDMP. Further epoxidation by the FAD-dependent monooxygenase andE leads to epoxyfarnesyl-DHDMP. The next step involves the terpene cyclase andB that converts epoxyfarnesyl-DHDMP into preandiloid A through opening of the epoxide ring followed by the cyclization of the farnesyl moiety. Preandiloid A is in turn oxidized at the C-3 hydroxyl group to yield preandiloid B by the dehydrogenase andC. The dioxygenase andA is solely responsible for the dehydrogenation of preandiloid B leading to the enone preandiloid C, as well as for the intriguing structural rearrangement to generate the bicyclo[2.2.2]octane core, transforming preandiloid C into andiconin. FAD-binding monooxygenase andJ then produces andilesin D which is reduced by dehydrogenase andI to yield andilesin A. Action of acetyltransferase andG followed by a spontaneous acetate elimination leads then to andilesin B, which is in turn substrate of the short chain dehydrogenase andH to yield andilesin C. Finally, the dioxygenase andF catalyzes the transformation of andilesin C to anditomin. The sequence is that of Short chain dehydrogenase andI from Emericella variicolor (Aspergillus stellatus).